A 471-amino-acid chain; its full sequence is Ribulose bisphosphate carboxylase large chain (471 aa).

Residues N115 and T165 each coordinate substrate. The active-site Proton acceptor is K167. K169 lines the substrate pocket. 3 residues coordinate Mg(2+): K193, D195, and E196. K193 carries the post-translational modification N6-carboxylysine. H286 serves as the catalytic Proton acceptor. Substrate is bound by residues R287, H319, and S371.

The protein belongs to the RuBisCO large chain family. Type I subfamily. As to quaternary structure, heterohexadecamer of 8 large chains and 8 small chains. Forms a CsoS2-CsoS1-RuBisCO complex. Mg(2+) is required as a cofactor.

It is found in the carboxysome. The catalysed reaction is 2 (2R)-3-phosphoglycerate + 2 H(+) = D-ribulose 1,5-bisphosphate + CO2 + H2O. It catalyses the reaction D-ribulose 1,5-bisphosphate + O2 = 2-phosphoglycolate + (2R)-3-phosphoglycerate + 2 H(+). RuBisCO catalyzes two reactions: the carboxylation of D-ribulose 1,5-bisphosphate, the primary event in carbon dioxide fixation, as well as the oxidative fragmentation of the pentose substrate in the photorespiration process. Both reactions occur simultaneously and in competition at the same active site. The protein is Ribulose bisphosphate carboxylase large chain of Parasynechococcus marenigrum (strain WH8102).